The following is a 1765-amino-acid chain: Tight junction protein ZO-1 (1765 aa).

A PDZ 1 domain is found at Thr-23 to Lys-110. Residues Ala-102–Val-112 are compositionally biased toward basic residues. The segment at Ala-102–Leu-189 is disordered. Residues Pro-123–Val-136 are compositionally biased toward acidic residues. Ser-125 is modified (phosphoserine). At Tyr-132 the chain carries Phosphotyrosine. The span at Arg-149–Ser-175 shows a compositional bias: basic and acidic residues. Ser-175, Ser-178, and Ser-179 each carry phosphoserine. Thr-185 carries the phosphothreonine modification. One can recognise a PDZ 2 domain in the interval Lys-186–Glu-264. Phosphoserine occurs at positions 212 and 241. Thr-267 is modified (phosphothreonine). Residues Ser-275, Ser-277, Ser-280, Ser-284, Ser-290, Ser-294, Ser-297, Ser-300, Ser-323, Ser-329, Ser-334, Ser-337, and Ser-353 each carry the phosphoserine modification. The tract at residues Ala-296–Thr-363 is disordered. A compositionally biased stretch (basic and acidic residues) spans His-299–Pro-308. The span at His-325–Leu-338 shows a compositional bias: polar residues. Thr-354 bears the Phosphothreonine mark. The 82-residue stretch at Ser-421–Lys-502 folds into the PDZ 3 domain. The SH3 domain occupies Gly-516–Ala-584. 2 positions are modified to phosphoserine: Ser-617 and Ser-622. The segment at Tyr-633 to Arg-876 is occludin (OCLN)-binding region. The 102-residue stretch at Arg-690–Gln-791 folds into the Guanylate kinase-like domain. Position 809 is a phosphothreonine (Thr-809). Phosphoserine is present on residues Ser-810 and Ser-821. Tyr-822 carries the post-translational modification Phosphotyrosine. Phosphoserine occurs at positions 824, 828, and 837. 2 disordered regions span residues Ala-825–Ser-941 and Ala-1023–Gln-1042. A phosphothreonine mark is found at Thr-846, Thr-848, Thr-854, Thr-861, and Thr-868. Positions Glu-879 to Asn-892 are enriched in basic and acidic residues. Positions Gln-893–Ala-906 are enriched in low complexity. At Ser-912 the chain carries Phosphoserine. A Phosphoserine modification is found at Ser-1071. Positions Ser-1092–Ser-1585 are disordered. A compositionally biased stretch (basic and acidic residues) spans Asp-1106 to Glu-1124. A phosphotyrosine mark is found at Tyr-1139 and Tyr-1164. Positions Arg-1150–Pro-1370 are actin-binding region (ABR). Composition is skewed to basic and acidic residues over residues Lys-1268–Asn-1285 and Pro-1335–Asp-1346. Tyr-1353 is modified (phosphotyrosine). Ser-1365 bears the Phosphoserine mark. Residues Ser-1388 to Ser-1399 show a composition bias toward low complexity. The segment covering Gly-1401–Asp-1418 has biased composition (basic and acidic residues). Ser-1411 carries the post-translational modification Phosphoserine. 2 stretches are compositionally biased toward polar residues: residues Asn-1442–Ile-1468 and Gly-1509–Pro-1519. The span at Pro-1535–Lys-1544 shows a compositional bias: basic and acidic residues. Phosphoserine occurs at positions 1542 and 1614. The region spanning Ala-1631 to Phe-1765 is the ZU5 domain.

The protein belongs to the MAGUK family. Homodimer. Forms heterodimers TJP3. Forms a heterodimer (via PDZ2 domain) with TJP2/ZO2 (via PDZ2 domain). Interacts with OCLN. Interacts with CALM, claudins, CGN/cingulin, CXADR, GJA12, GJD3 and UBN1. Interacts (via ZU5 domain) with CDC42BPB and MYZAP. Interacts (via PDZ domain) with GJA1. Interacts (via PDZ domains) with ANKRD2. Interacts with BVES (via the C-terminus cytoplasmic tail). Interacts with HSPA4. Interacts with KIRREL1. Interacts with DLL1. Interacts with USP53 (via the C-terminal region). Interacts with DNMBP (via C-terminal domain); required for the apical cell-cell junction localization of DNMBP. Interacts with SPEF1. Interacts (via N-terminus) with CTNNA1. Interacts with CLDN18. Interacts with CLDN16 (via TRV motif); this is a prerequisite for anchoring of CLDN16 at the tight junction. Interacts with PKP1; the interaction facilitates TJP1/ZO-1 localization to the plasma membrane. Phosphorylated at tyrosine redidues in response to epidermal growth factor (EGF). This response is dependent on an intact actin microfilament system. Dephosphorylated by Ptprj.

It localises to the cell membrane. Its subcellular location is the cell junction. The protein resides in the tight junction. It is found in the gap junction. Functionally, tjpP1, Tjp2, and Tjp3 are closely related scaffolding proteins that link tight junction (TJ) transmembrane proteins such as claudins, junctional adhesion molecules, and occludin to the actin cytoskeleton. The tight junction acts to limit movement of substances through the paracellular space and as a boundary between the compositionally distinct apical and basolateral plasma membrane domains of epithelial and endothelial cells. Necessary for lumenogenesis, and particularly efficient epithelial polarization and barrier formation. Plays a role in the regulation of cell migration by targeting Cdc42bpb to the leading edge of migrating cells. Plays an important role in podosome formation and associated function, thus regulating cell adhesion and matrix remodeling. With Tjp2 and Tjp3, participates in the junctional retention and stability of the transcription factor Dbpa, but is not involved in its shuttling to the nucleus. May play a role in mediating cell morphology changes during ameloblast differentiation via its role in tight junctions. The sequence is that of Tight junction protein ZO-1 from Rattus norvegicus (Rat).